The following is a 723-amino-acid chain: Catalase-peroxidase (723 aa).

Residues 97–225 (WHAAGSYRVT…LAAVQMGLIY (129 aa)) constitute a cross-link (tryptophyl-tyrosyl-methioninium (Trp-Tyr) (with M-251)). The active-site Proton acceptor is the histidine 98. The segment at residues 225 to 251 (YVNPEGVNGKSDPLATAAQMRETFARM) is a cross-link (tryptophyl-tyrosyl-methioninium (Tyr-Met) (with W-97)). Histidine 266 provides a ligand contact to heme b.

Belongs to the peroxidase family. Peroxidase/catalase subfamily. Homodimer or homotetramer. It depends on heme b as a cofactor. Formation of the three residue Trp-Tyr-Met cross-link is important for the catalase, but not the peroxidase activity of the enzyme.

The enzyme catalyses H2O2 + AH2 = A + 2 H2O. It catalyses the reaction 2 H2O2 = O2 + 2 H2O. Its function is as follows. Bifunctional enzyme with both catalase and broad-spectrum peroxidase activity. This is Catalase-peroxidase from Agrobacterium fabrum (strain C58 / ATCC 33970) (Agrobacterium tumefaciens (strain C58)).